A 317-amino-acid chain; its full sequence is UV DNA damage endonuclease (317 aa).

The protein belongs to the uve1/UvsE family.

Functionally, component in a DNA repair pathway. Removal of UV LIGHT damaged nucleotides. Recognizes pyrimidine dimers and cleave a phosphodiester bond immediately 5' to the lesion. This Bacillus cereus (strain B4264) protein is UV DNA damage endonuclease.